A 548-amino-acid chain; its full sequence is T-complex protein 1 subunit theta (548 aa).

At alanine 2 the chain carries N-acetylalanine. The residue at position 23 (serine 23) is a Phosphoserine. Tyrosine 30 bears the Phosphotyrosine mark. 2 residues coordinate ADP: tyrosine 47 and glycine 48. Residue aspartate 99 coordinates Mg(2+). ADP is bound by residues glycine 100, threonine 101, asparagine 102, and phenylalanine 103. ATP contacts are provided by glycine 100, threonine 101, and asparagine 102. Phosphoserine is present on serine 162. 3 residues coordinate ADP: methionine 169, serine 170, and lysine 171. The ATP site is built by serine 170 and lysine 171. A Phosphoserine modification is found at serine 213. Glycyl lysine isopeptide (Lys-Gly) (interchain with G-Cter in SUMO2) cross-links involve residues lysine 224, lysine 254, and lysine 260. Residues serine 269 and serine 317 each carry the phosphoserine modification. 2 positions are modified to N6-acetyllysine: lysine 318 and lysine 400. An ADP-binding site is contributed by glycine 412. Glycine 412 provides a ligand contact to ATP. Lysine 459 participates in a covalent cross-link: Glycyl lysine isopeptide (Lys-Gly) (interchain with G-Cter in SUMO1). An N6-acetyllysine modification is found at lysine 466. Aspartate 499 is a binding site for ADP. Residues aspartate 499 and lysine 504 each contribute to the ATP site. Residue tyrosine 505 is modified to Phosphotyrosine. Residues 529–548 (PAGGPKPPSGKKDWDDDQND) form a disordered region. A Glycyl lysine isopeptide (Lys-Gly) (interchain with G-Cter in SUMO2) cross-link involves residue lysine 534. Serine 537 is modified (phosphoserine). Residue lysine 539 forms a Glycyl lysine isopeptide (Lys-Gly) (interchain with G-Cter in SUMO2) linkage.

The protein belongs to the TCP-1 chaperonin family. As to quaternary structure, component of the chaperonin-containing T-complex (TRiC), a hexadecamer composed of two identical back-to-back stacked rings enclosing a protein folding chamber. Each ring is made up of eight different subunits: TCP1/CCT1, CCT2, CCT3, CCT4, CCT5, CCT6A/CCT6, CCT7, CCT8. Interacts with PACRG. Interacts with DNAAF4. Interacts with synaptic plasticity regulator PANTS.

It localises to the cytoplasm. The protein resides in the cytoskeleton. It is found in the microtubule organizing center. The protein localises to the centrosome. Its subcellular location is the cilium basal body. The enzyme catalyses ATP + H2O = ADP + phosphate + H(+). Its function is as follows. Component of the chaperonin-containing T-complex (TRiC), a molecular chaperone complex that assists the folding of actin, tubulin and other proteins upon ATP hydrolysis. The TRiC complex mediates the folding of WRAP53/TCAB1, thereby regulating telomere maintenance. As part of the TRiC complex may play a role in the assembly of BBSome, a complex involved in ciliogenesis regulating transports vesicles to the cilia. In Macaca fascicularis (Crab-eating macaque), this protein is T-complex protein 1 subunit theta (CCT8).